An 886-amino-acid polypeptide reads, in one-letter code: Cadherin-1 (886 aa).

Residues Met-1–Gln-23 form the signal peptide. Positions Gln-24 to Arg-158 are excised as a propeptide. Residues Gln-24 to Ala-713 lie on the Extracellular side of the membrane. 5 Cadherin domains span residues Asp-159–Phe-266, Ile-267–Phe-379, Asn-380–Phe-490, Val-491–Pro-597, and Ile-598–Lys-701. Position 261 (Asp-261) interacts with Ca(2+). Residues Ser-284 and Ser-289 are each glycosylated (O-linked (Man...) serine). Asp-292 provides a ligand contact to Ca(2+). O-linked (Man...) threonine glycans are attached at residues Thr-362, Thr-474, Thr-476, and Thr-513. Residue Asn-562 is glycosylated (N-linked (GlcNAc...) asparagine). Thr-580, Thr-582, and Thr-584 each carry an O-linked (Man...) threonine glycan. N-linked (GlcNAc...) asparagine glycosylation occurs at Asn-641. The helical transmembrane segment at Ile-714–Phe-734 threads the bilayer. Residues Leu-735–Asp-886 lie on the Cytoplasmic side of the membrane. The disordered stretch occupies residues Asp-751–Phe-771. Phosphotyrosine; by SRC occurs at positions 757, 758, and 759. Acidic residues predominate over residues Tyr-759 to Phe-771. A required for binding CTNND1 and PSEN1 region spans residues Glu-762 to Leu-773. 5 positions are modified to phosphoserine: Ser-774, Ser-797, Ser-842, Ser-844, and Ser-850. The tract at residues Ile-815–Asp-886 is required for binding alpha, beta and.

Homodimer; disulfide-linked. Component of an E-cadherin/ catenin adhesion complex composed of at least E-cadherin/CDH1, beta-catenin/CTNNB1 or gamma-catenin/JUP, and potentially alpha-catenin/CTNNA1; the complex is located to adherens junctions. Found in a complex composed of CDH1, RAP1A and PKP3; PKP3 acts as a scaffold protein within the complex, the complex is required for CDH1 localization to mature desmosome cell junctions. Interacts with the TRPV4 and CTNNB1 complex. Interacts with CTNND1. The stable association of CTNNA1 is controversial as CTNNA1 was shown not to bind to F-actin when assembled in the complex. Alternatively, the CTNNA1-containing complex may be linked to F-actin by other proteins such as LIMA1. Interaction with PSEN1, cleaves CDH1 resulting in the disassociation of cadherin-based adherens junctions (CAJs). Interacts with AJAP1 and DLGAP5. Interacts with TBC1D2. Interacts with LIMA1. Interacts with CAV1. Interacts with PIP5K1C. Interacts with DDR1; this stabilizes CDH1 at the cell surface and inhibits its internalization. Interacts with RAPGEF2. Interacts with RAB8B. Interacts with KLRG1. Forms a ternary complex composed of ADAM10, CADH1 and EPHA4; within the complex, CADH1 is cleaved by ADAM10 which disrupts adherens junctions. Interacts with SPEF1. Interacts with CTNNB1 and PKP2. Interacts with AMOTL2; the interaction may facilitate binding of radial actin fibers to cell junction complexes. Interacts with DSG3; the interaction is required for CDH1 localization to developing adherens junctions. During apoptosis or with calcium influx, cleaved by a membrane-bound metalloproteinase (ADAM10), PS1/gamma-secretase and caspase-3. Processing by the metalloproteinase, induced by calcium influx, causes disruption of cell-cell adhesion and the subsequent release of beta-catenin into the cytoplasm. The residual membrane-tethered cleavage product is rapidly degraded via an intracellular proteolytic pathway. Cleavage by caspase-3 releases the cytoplasmic tail resulting in disintegration of the actin microfilament system. The gamma-secretase-mediated cleavage promotes disassembly of adherens junctions. During development of the cochlear organ of Corti, cleavage by ADAM10 at adherens junctions promotes pillar cell separation. In terms of processing, N-glycosylation at Asn-641 is essential for expression, folding and trafficking. Addition of bisecting N-acetylglucosamine by MGAT3 modulates its cell membrane location. Post-translationally, ubiquitinated by a SCF complex containing SKP2, which requires prior phosphorylation by CK1/CSNK1A1. Ubiquitinated by CBLL1/HAKAI, requires prior phosphorylation at Tyr-758. O-glycosylated. O-manosylated by TMTC1, TMTC2, TMTC3 or TMTC4. Ser-289 and Thr-513 are O-manosylated by TMTC2 or TMTC4 but not TMTC1 or TMTC3.

Its subcellular location is the cell junction. It localises to the adherens junction. The protein localises to the cell membrane. It is found in the endosome. The protein resides in the golgi apparatus. Its subcellular location is the trans-Golgi network. It localises to the cytoplasm. The protein localises to the desmosome. Cadherins are calcium-dependent cell adhesion proteins. They preferentially interact with themselves in a homophilic manner in connecting cells; cadherins may thus contribute to the sorting of heterogeneous cell types. CDH1 is involved in mechanisms regulating cell-cell adhesions, mobility and proliferation of epithelial cells. Promotes organization of radial actin fiber structure and cellular response to contractile forces, via its interaction with AMOTL2 which facilitates anchoring of radial actin fibers to CDH1 junction complexes at the cell membrane. Plays a role in the early stages of desmosome cell-cell junction formation via facilitating the recruitment of DSG2 and DSP to desmosome plaques. Has a potent invasive suppressor role. It is a ligand for integrin alpha-E/beta-7. Its function is as follows. E-Cad/CTF2 promotes non-amyloidogenic degradation of Abeta precursors. Has a strong inhibitory effect on APP C99 and C83 production. The sequence is that of Cadherin-1 (Cdh1) from Rattus norvegicus (Rat).